The following is an 872-amino-acid chain: Cilia- and flagella-associated protein 58 (872 aa).

Coiled-coil stretches lie at residues 106–595 (VDSA…ADGE) and 642–839 (ESQY…QKNK).

This sequence belongs to the CFAP58 family. As to quaternary structure, interacts with ODFP2.

The protein resides in the cell projection. The protein localises to the cilium. It is found in the flagellum. Its subcellular location is the cytoplasm. It localises to the cytoskeleton. The protein resides in the microtubule organizing center. The protein localises to the centrosome. Has an essential role in the assembly and organization of the sperm flagellar axoneme. Required for the elongation of the primary cilium and sperm flagellar midpiece via modulation of the Notch signaling pathway. This Homo sapiens (Human) protein is Cilia- and flagella-associated protein 58.